The sequence spans 414 residues: Histidine--tRNA ligase (414 aa).

The protein belongs to the class-II aminoacyl-tRNA synthetase family. In terms of assembly, homodimer.

Its subcellular location is the cytoplasm. The enzyme catalyses tRNA(His) + L-histidine + ATP = L-histidyl-tRNA(His) + AMP + diphosphate + H(+). The chain is Histidine--tRNA ligase from Endomicrobium trichonymphae.